Reading from the N-terminus, the 112-residue chain is Colipase (112 aa).

The N-terminal stretch at 1–17 is a signal peptide; the sequence is MEKILVLLLVALAVVYA. The propeptide at 18-22 is enterostatin, activation peptide; sequence VPDPR. Disulfide bonds link C34–C45, C40–C56, C44–C78, C66–C86, and C80–C104.

It belongs to the colipase family. Forms a 1:1 stoichiometric complex with pancreatic lipase. In terms of tissue distribution, expressed by the pancreas.

The protein localises to the secreted. Its function is as follows. Colipase is a cofactor of pancreatic lipase. It allows the lipase to anchor itself to the lipid-water interface. Without colipase the enzyme is washed off by bile salts, which have an inhibitory effect on the lipase. Functionally, enterostatin has a biological activity as a satiety signal. This Canis lupus familiaris (Dog) protein is Colipase (CLPS).